Reading from the N-terminus, the 408-residue chain is Aminoacylase-1 (408 aa).

Histidine 80 is a binding site for Zn(2+). Aspartate 82 is an active-site residue. Aspartate 113 is a binding site for Zn(2+). Glutamate 147 acts as the Proton acceptor in catalysis. Residues glutamate 148, glutamate 175, and histidine 373 each coordinate Zn(2+).

It belongs to the peptidase M20A family. Homodimer. Interacts with SPHK1. Requires Zn(2+) as cofactor.

The protein resides in the cytoplasm. It catalyses the reaction an N-acyl-L-amino acid + H2O = an L-alpha-amino acid + a carboxylate. It carries out the reaction N-acetyl-L-methionine + H2O = L-methionine + acetate. The catalysed reaction is N-acetyl-L-glutamine + H2O = L-glutamine + acetate. Catalyzes the hydrolysis of N-acetylated amino acids to acetate and free amino acids. This Pongo abelii (Sumatran orangutan) protein is Aminoacylase-1 (ACY1).